The chain runs to 274 residues: MEALRQRIETAFEARAEITPTTVEPSVRADVEKAIAMLDTGEARVAEKIDGQWNVHQWLKKAVLLSFRIFDNQVIDGAETKFFDKVPMKFADYDEARFKQEAIRVVPPAAVRKGSFIGKNTVLMPSYVNLGAYVDEGTMVDTWATVGSCAQIGKNVHLSGGVGIGGVLEPLQAGPTIIEDNCFIGARSEIVEGVVVEEGSVISMGVYIGQSTRIYDRETGEIHYGRVPAGSVVVSGTLPSQCGKYNLYAAIIVKKVDAKTRGKVGINELLRIVD.

Substrate is bound by residues R104 and D141.

Belongs to the transferase hexapeptide repeat family. Homotrimer.

Its subcellular location is the cytoplasm. It carries out the reaction (S)-2,3,4,5-tetrahydrodipicolinate + succinyl-CoA + H2O = (S)-2-succinylamino-6-oxoheptanedioate + CoA. Its pathway is amino-acid biosynthesis; L-lysine biosynthesis via DAP pathway; LL-2,6-diaminopimelate from (S)-tetrahydrodipicolinate (succinylase route): step 1/3. This chain is 2,3,4,5-tetrahydropyridine-2,6-dicarboxylate N-succinyltransferase, found in Shewanella loihica (strain ATCC BAA-1088 / PV-4).